A 142-amino-acid chain; its full sequence is Galactose-6-phosphate isomerase subunit LacA (142 aa).

The protein belongs to the LacAB/RpiB family. In terms of assembly, heteromultimeric protein consisting of LacA and LacB.

The catalysed reaction is aldehydo-D-galactose 6-phosphate = keto-D-tagatose 6-phosphate. It functions in the pathway carbohydrate metabolism; D-galactose 6-phosphate degradation; D-tagatose 6-phosphate from D-galactose 6-phosphate: step 1/1. In Staphylococcus epidermidis (strain ATCC 35984 / DSM 28319 / BCRC 17069 / CCUG 31568 / BM 3577 / RP62A), this protein is Galactose-6-phosphate isomerase subunit LacA.